The following is a 371-amino-acid chain: Neuropeptide Y receptor type 6 (371 aa).

The Extracellular portion of the chain corresponds to 1-31 (MEVSLNDPASNKTSAKSNSSAFFYFESCQSP). 2 N-linked (GlcNAc...) asparagine glycosylation sites follow: N11 and N18. The helical transmembrane segment at 32–52 (SLALLLLLIAYTVVLIMGICG) threads the bilayer. Residues 53 to 72 (NLSLITIIFKKQREAQNVTN) lie on the Cytoplasmic side of the membrane. The chain crosses the membrane as a helical span at residues 73-93 (ILIANLSLSDILVCVMCIPFT). The Extracellular portion of the chain corresponds to 94-111 (AIYTLMDRWIFGNTMCKL). A disulfide bridge connects residues C109 and C196. A helical transmembrane segment spans residues 112-132 (TSYVQSVSISVSIFSLVLIAI). At 133–150 (ERYQLIVNPRGWKPSASH) the chain is on the cytoplasmic side. Residues 151–171 (AYWGIMLIWLFSLLLSIPLLL) traverse the membrane as a helical segment. The Extracellular portion of the chain corresponds to 172 to 213 (SYHLTDEPFRNLSLPTDLYSHHVVCVEHWPSKTNQLLYSTSL). The N-linked (GlcNAc...) asparagine glycan is linked to N182. The chain crosses the membrane as a helical span at residues 214 to 234 (IMLQYFVPLGFMFICYLKIVI). At 235-263 (CLHKRNSKIDRRRENESRLTENKRINTML) the chain is on the cytoplasmic side. Residues 264 to 284 (ISIVVTFAACWLPLNTFNVIF) form a helical membrane-spanning segment. Over 285-297 (DWYHEVLMSCHHD) the chain is Extracellular. A helical membrane pass occupies residues 298–318 (LVFAICHLVAMVSTCINPLFY). Residues 319-371 (GFLNRNFQKDLVVLIHHCLCFALRERYENIAISTLHTDESKGSLRVAHIPAGI) lie on the Cytoplasmic side of the membrane. A lipid anchor (S-palmitoyl cysteine) is attached at C336.

The protein belongs to the G-protein coupled receptor 1 family. In terms of tissue distribution, expressed in hippocampus, striatum, hypothalamus, cerebellum, small intestine, colon and adrenal gland.

Its subcellular location is the cell membrane. Functionally, receptor for neuropeptide Y and peptide YY. The activity of this receptor is mediated by G proteins that inhibit adenylate cyclase activity. The protein is Neuropeptide Y receptor type 6 (NPY6R) of Oryctolagus cuniculus (Rabbit).